The sequence spans 332 residues: L-lactate dehydrogenase A chain (332 aa).

NAD(+)-binding positions include Gly29–Lys57 and Arg99. 3 residues coordinate substrate: Arg106, Asn138, and Arg169. Asn138 lines the NAD(+) pocket. His193 acts as the Proton acceptor in catalysis. Thr248 provides a ligand contact to substrate.

It belongs to the LDH/MDH superfamily. LDH family. In terms of assembly, homotetramer.

Its subcellular location is the cytoplasm. It catalyses the reaction (S)-lactate + NAD(+) = pyruvate + NADH + H(+). The protein operates within fermentation; pyruvate fermentation to lactate; (S)-lactate from pyruvate: step 1/1. In terms of biological role, interconverts simultaneously and stereospecifically pyruvate and lactate with concomitant interconversion of NADH and NAD(+). The protein is L-lactate dehydrogenase A chain (ldha) of Sphyraena lucasana (Lucas barracuda).